A 703-amino-acid polypeptide reads, in one-letter code: MAQRDLKFTRNIGIAAHIDAGKTTTTERILYYTGISHKIGEVHDGAATMDWMEQEQERGITITSAATHCKWMYRDQEFTVNIIDTPGHVDFTVEVERSLRVLDGVVALFSAVDGVEPQSETVWRQADKYRVPRLGFVNKMDRQGADFFNVCRQVREMLGGNPVPLQVPIGDEIDFKGVVDLISKKAIIWNDEDHGMTYDTIEIPEELLDDVNKYRAELVEAVAEYDEALMEKFFEDESSITEDEIIAALRAATIDMSIIPMMCGSAFKNKGVQAMLDAVMRYLPSPADVEAIEGTNPDTGEEESRKPHVDSPFAALAFKIATDPFVGRLAFFRAYSGTLDAGSYVLNVRSGKKERISRIYQMHSNKQEPIDSIEAGDIGAAVGFKDIKTGDTLTDMKHPIVLESMSFPAPVIGIAVEPKTKADVEKMGMALGKLAEEDPTFTVKTDENSGQTIISGMGELHLEIIIDRMKREFKVEVNVGEPQVEYKETITKSADHREVYKKQSGGRGKFADIVFEMGPIDEDFEGTGLQFVDVIKGGRIPKEFVPSVEKGFKEAMKNGPLAGFTMDSLKVTLKDGSFHPVDSDQLSFELAAKMGYKDAAKKAGAVILEPIMKVEVVTPEENMGDIVGDLNRRRGQVNNMSDRSGAKVIKAEVPLSEMFGYVTTLRTLSSGRATSTMEFSHYAETPSNISEEVIKAAKGAANE.

A tr-type G domain is found at 7–287 (KFTRNIGIAA…AVMRYLPSPA (281 aa)). GTP contacts are provided by residues 16-23 (AHIDAGKT), 84-88 (DTPGH), and 138-141 (NKMD).

This sequence belongs to the TRAFAC class translation factor GTPase superfamily. Classic translation factor GTPase family. EF-G/EF-2 subfamily.

The protein resides in the cytoplasm. Its function is as follows. Catalyzes the GTP-dependent ribosomal translocation step during translation elongation. During this step, the ribosome changes from the pre-translocational (PRE) to the post-translocational (POST) state as the newly formed A-site-bound peptidyl-tRNA and P-site-bound deacylated tRNA move to the P and E sites, respectively. Catalyzes the coordinated movement of the two tRNA molecules, the mRNA and conformational changes in the ribosome. This Christiangramia forsetii (strain DSM 17595 / CGMCC 1.15422 / KT0803) (Gramella forsetii) protein is Elongation factor G.